The following is a 287-amino-acid chain: Small ribosomal subunit protein uS2 (287 aa).

The segment at 235–287 is disordered; that stretch reads ESGFATGGGDWEATAPAAASGWDDAAAQPQNWDSAAQGAASWDEAAAPKEGQW. Positions 247–261 are enriched in low complexity; it reads ATAPAAASGWDDAAA.

This sequence belongs to the universal ribosomal protein uS2 family. Component of the small ribosomal subunit. Mature ribosomes consist of a small (40S) and a large (60S) subunit. The 40S subunit contains about 33 different proteins and 1 molecule of RNA (18S). The 60S subunit contains about 49 different proteins and 3 molecules of RNA (25S, 5.8S and 5S). Interacts with RPS21.

It localises to the cytoplasm. Required for the assembly and/or stability of the 40S ribosomal subunit. Required for the processing of the 20S rRNA-precursor to mature 18S rRNA in a late step of the maturation of 40S ribosomal subunits. This Pyricularia oryzae (strain 70-15 / ATCC MYA-4617 / FGSC 8958) (Rice blast fungus) protein is Small ribosomal subunit protein uS2.